The chain runs to 136 residues: Large ribosomal subunit protein uL16 (136 aa).

This sequence belongs to the universal ribosomal protein uL16 family. In terms of assembly, part of the 50S ribosomal subunit.

Its function is as follows. Binds 23S rRNA and is also seen to make contacts with the A and possibly P site tRNAs. This Sodalis glossinidius (strain morsitans) protein is Large ribosomal subunit protein uL16.